The chain runs to 629 residues: Polyadenylate-binding protein, cytoplasmic and nuclear (629 aa).

Polar residues predominate over residues 1 to 11; it reads MSAAETNQLQE. Residues 1 to 48 are disordered; the sequence is MSAAETNQLQESMEKLNIGSTTEEQSAAAATTTADQSAEEQGESSGVA. Residues 20–36 are compositionally biased toward low complexity; sequence STTEEQSAAAATTTADQ. RRM domains follow at residues 52 to 130, 140 to 217, 233 to 310, and 336 to 413; these read ASLY…WSQR, GNIF…KHIS, TNIY…RAQK, and VNLF…LAQR. Positions 503–534 are disordered; that stretch reads PPQFQQDFNGQNMRPQQQQQQQPRGGYYPNRN. The segment covering 505–517 has biased composition (polar residues); it reads QFQQDFNGQNMRP. The region spanning 537–618 is the PABC domain; it reads SKRDLAAIIS…ALTAFEEYKK (82 aa).

It belongs to the polyadenylate-binding protein type-1 family.

The protein localises to the cytoplasm. It localises to the nucleus. Functionally, binds the poly(A) tail of mRNA. Appears to be an important mediator of the multiple roles of the poly(A) tail in mRNA biogenesis, stability and translation. In the nucleus, involved in both mRNA cleavage and polyadenylation. Is also required for efficient mRNA export to the cytoplasm. Acts in concert with a poly(A)-specific nuclease (PAN) to affect poly(A) tail shortening, which may occur concomitantly with either nucleocytoplasmic mRNA transport or translational initiation. In the cytoplasm, stimulates translation initiation and regulates mRNA decay through translation termination-coupled poly(A) shortening, probably mediated by PAN. The chain is Polyadenylate-binding protein, cytoplasmic and nuclear (PAB1) from Candida albicans (strain SC5314 / ATCC MYA-2876) (Yeast).